We begin with the raw amino-acid sequence, 118 residues long: ATP synthase subunit gamma, chloroplastic (118 aa).

Cys30 and Cys36 are joined by a disulfide.

Belongs to the ATPase gamma chain family. F-type ATPases have 2 components, CF(1) - the catalytic core - and CF(0) - the membrane proton channel. CF(1) has five subunits: alpha(3), beta(3), gamma(1), delta(1), epsilon(1). CF(0) has four main subunits: a, b, b' and c.

It localises to the plastid. Its subcellular location is the chloroplast thylakoid membrane. Produces ATP from ADP in the presence of a proton gradient across the membrane. The gamma chain is believed to be important in regulating ATPase activity and the flow of protons through the CF(0) complex. Functionally, inceptin is a proteolytic fragment produced by insect larvae that previously ingested the protein. This peptide mediate plant perception of herbivory through the induction of volatile, phenylpropanoid and protease inhibitor defenses such as ethylene, jasmonic acid and salicylic acid for example. In Vigna unguiculata (Cowpea), this protein is ATP synthase subunit gamma, chloroplastic.